An 83-amino-acid chain; its full sequence is Large ribosomal subunit protein eL14 (83 aa).

This sequence belongs to the eukaryotic ribosomal protein eL14 family.

The polypeptide is Large ribosomal subunit protein eL14 (Thermococcus onnurineus (strain NA1)).